We begin with the raw amino-acid sequence, 48 residues long: ATP synthase protein 8 (48 aa).

The chain crosses the membrane as a helical span at residues 13-32 (VVFTLISLSFIFFVFSKYIL).

The protein belongs to the ATPase protein 8 family. F-type ATPases have 2 components, CF(1) - the catalytic core - and CF(0) - the membrane proton channel.

It localises to the mitochondrion membrane. Its function is as follows. Mitochondrial membrane ATP synthase (F(1)F(0) ATP synthase or Complex V) produces ATP from ADP in the presence of a proton gradient across the membrane which is generated by electron transport complexes of the respiratory chain. F-type ATPases consist of two structural domains, F(1) - containing the extramembraneous catalytic core and F(0) - containing the membrane proton channel, linked together by a central stalk and a peripheral stalk. During catalysis, ATP synthesis in the catalytic domain of F(1) is coupled via a rotary mechanism of the central stalk subunits to proton translocation. Part of the complex F(0) domain. Minor subunit located with subunit a in the membrane. In Trichophyton rubrum (Athlete's foot fungus), this protein is ATP synthase protein 8 (ATP8).